Consider the following 428-residue polypeptide: Adenylosuccinate synthetase (428 aa).

GTP contacts are provided by residues 11–17 (GDEGKGK) and 39–41 (GHT). D12 acts as the Proton acceptor in catalysis. Residues D12 and G39 each coordinate Mg(2+). IMP is bound by residues 12–15 (DEGK), 37–40 (NAGH), T130, R144, N226, T241, and R305. H40 (proton donor) is an active-site residue. 301 to 307 (VTTGRKR) serves as a coordination point for substrate. Residues R307, 333–335 (KLD), and 415–417 (GTG) contribute to the GTP site.

Belongs to the adenylosuccinate synthetase family. In terms of assembly, homodimer. Mg(2+) is required as a cofactor.

Its subcellular location is the cytoplasm. The enzyme catalyses IMP + L-aspartate + GTP = N(6)-(1,2-dicarboxyethyl)-AMP + GDP + phosphate + 2 H(+). It functions in the pathway purine metabolism; AMP biosynthesis via de novo pathway; AMP from IMP: step 1/2. Plays an important role in the de novo pathway and in the salvage pathway of purine nucleotide biosynthesis. Catalyzes the first committed step in the biosynthesis of AMP from IMP. The polypeptide is Adenylosuccinate synthetase (Lodderomyces elongisporus (strain ATCC 11503 / CBS 2605 / JCM 1781 / NBRC 1676 / NRRL YB-4239) (Yeast)).